A 509-amino-acid polypeptide reads, in one-letter code: ATP synthase subunit alpha (509 aa).

169 to 176 (GDRQTGKT) is a binding site for ATP.

This sequence belongs to the ATPase alpha/beta chains family. F-type ATPases have 2 components, CF(1) - the catalytic core - and CF(0) - the membrane proton channel. CF(1) has five subunits: alpha(3), beta(3), gamma(1), delta(1), epsilon(1). CF(0) has three main subunits: a(1), b(2) and c(9-12). The alpha and beta chains form an alternating ring which encloses part of the gamma chain. CF(1) is attached to CF(0) by a central stalk formed by the gamma and epsilon chains, while a peripheral stalk is formed by the delta and b chains.

Its subcellular location is the cell inner membrane. It carries out the reaction ATP + H2O + 4 H(+)(in) = ADP + phosphate + 5 H(+)(out). Its function is as follows. Produces ATP from ADP in the presence of a proton gradient across the membrane. The alpha chain is a regulatory subunit. This Sinorhizobium medicae (strain WSM419) (Ensifer medicae) protein is ATP synthase subunit alpha.